We begin with the raw amino-acid sequence, 238 residues long: Cysteine-rich venom protein 2 (238 aa).

Positions 1-19 (MIAFIVLLSLAAVLQQSSG) are cleaved as a signal peptide. Residues 38–164 (VDKHNALRRS…STKYLYVCQY (127 aa)) enclose the SCP domain. 8 disulfides stabilise this stretch: Cys-75/Cys-153, Cys-92/Cys-165, Cys-148/Cys-162, Cys-184/Cys-191, Cys-187/Cys-196, Cys-200/Cys-233, Cys-209/Cys-227, and Cys-218/Cys-231. In terms of domain architecture, ShKT spans 200–233 (CEYEDAYTNCNDLVKERKCQTEWIKSQCPATCFC).

This sequence belongs to the CRISP family. Expressed by the venom gland.

The protein resides in the secreted. Functionally, blocks contraction of smooth muscle elicited by high potassium-induced depolarization, but does not block caffeine-stimulated contraction. May target voltage-gated calcium channels (Cav) on smooth muscle. The chain is Cysteine-rich venom protein 2 from Hydrophis hardwickii (Hardwick's spine-bellied seasnake).